Here is a 205-residue protein sequence, read N- to C-terminus: Holliday junction branch migration complex subunit RuvA (205 aa).

The tract at residues 1-64 is domain I; it reads MIGRLRGLLV…EDAQLLYGFI (64 aa). Residues 65–143 are domain II; that stretch reads TKQERALFRL…SLMEASAGSE (79 aa). The segment at 144–156 is flexible linker; sequence REFMLKSNYTPAP. Positions 157–205 are domain III; the sequence is VINTAEEDAIAALLSLGYKPAQASKAVSAVYQDGMDSETLIKSSLKSML.

The protein belongs to the RuvA family. As to quaternary structure, homotetramer. Forms an RuvA(8)-RuvB(12)-Holliday junction (HJ) complex. HJ DNA is sandwiched between 2 RuvA tetramers; dsDNA enters through RuvA and exits via RuvB. An RuvB hexamer assembles on each DNA strand where it exits the tetramer. Each RuvB hexamer is contacted by two RuvA subunits (via domain III) on 2 adjacent RuvB subunits; this complex drives branch migration. In the full resolvosome a probable DNA-RuvA(4)-RuvB(12)-RuvC(2) complex forms which resolves the HJ.

It localises to the cytoplasm. Its function is as follows. The RuvA-RuvB-RuvC complex processes Holliday junction (HJ) DNA during genetic recombination and DNA repair, while the RuvA-RuvB complex plays an important role in the rescue of blocked DNA replication forks via replication fork reversal (RFR). RuvA specifically binds to HJ cruciform DNA, conferring on it an open structure. The RuvB hexamer acts as an ATP-dependent pump, pulling dsDNA into and through the RuvAB complex. HJ branch migration allows RuvC to scan DNA until it finds its consensus sequence, where it cleaves and resolves the cruciform DNA. This is Holliday junction branch migration complex subunit RuvA from Shewanella sediminis (strain HAW-EB3).